Here is a 404-residue protein sequence, read N- to C-terminus: MSKLSIRDLDLAHKHVFMRVDFNVPLSEDGSEITDDTRIRETLPTIEYALRHKAKLILASHLGRPKGKVNPKYSLRPVVDRLRTLLDHDVTSRVNVAFSPDCVGDVAKELSLQLESGQVLLLENLRFHAEEEANDPEFARKLASLCEIYVNDAFGSAHRAHASTEGITHFVKQSAAGLLMEKELEYLGKALEAPAKPFVAIIGGAKVSDKIKVIDNLLNKVDALLIGGGMAYTFLKSQGQDVGKSLVEADKLDIAKAALDKAKEKGVRFLLPVDHILADKFAADAATQTFEGTGAFPAEWMALDIGPKSIELFTKEIAAADTIVWNGPMGVFEMPAFAKGTTAVAQAVADNVDAVSIIGGGDSVAAVKQAGVADKIKHISTGGGASLEFLEGKKLPGVEALTEK.

Substrate-binding positions include 21–23, Arg-38, 61–64, Arg-126, and Arg-159; these read DFN and HLGR. ATP-binding positions include Lys-210, Glu-333, and 360–363; that span reads GGDS.

It belongs to the phosphoglycerate kinase family. In terms of assembly, monomer.

Its subcellular location is the cytoplasm. The enzyme catalyses (2R)-3-phosphoglycerate + ATP = (2R)-3-phospho-glyceroyl phosphate + ADP. It participates in carbohydrate degradation; glycolysis; pyruvate from D-glyceraldehyde 3-phosphate: step 2/5. In Acidobacterium capsulatum (strain ATCC 51196 / DSM 11244 / BCRC 80197 / JCM 7670 / NBRC 15755 / NCIMB 13165 / 161), this protein is Phosphoglycerate kinase.